The following is a 215-amino-acid chain: dITP/XTP pyrophosphatase (215 aa).

Position 13-18 (13-18) interacts with substrate; the sequence is THNTGK. Catalysis depends on Asp74, which acts as the Proton acceptor. Residue Asp74 coordinates Mg(2+). Residues Ser75, 163 to 166, Lys186, and 199 to 200 contribute to the substrate site; these read FGFD and HR.

This sequence belongs to the HAM1 NTPase family. Homodimer. It depends on Mg(2+) as a cofactor.

It catalyses the reaction XTP + H2O = XMP + diphosphate + H(+). The enzyme catalyses dITP + H2O = dIMP + diphosphate + H(+). It carries out the reaction ITP + H2O = IMP + diphosphate + H(+). Its function is as follows. Pyrophosphatase that catalyzes the hydrolysis of nucleoside triphosphates to their monophosphate derivatives, with a high preference for the non-canonical purine nucleotides XTP (xanthosine triphosphate), dITP (deoxyinosine triphosphate) and ITP. Seems to function as a house-cleaning enzyme that removes non-canonical purine nucleotides from the nucleotide pool, thus preventing their incorporation into DNA/RNA and avoiding chromosomal lesions. The chain is dITP/XTP pyrophosphatase from Bartonella quintana (strain Toulouse) (Rochalimaea quintana).